Consider the following 617-residue polypeptide: uncharacterized protein (617 aa).

The helical transmembrane segment at 10 to 30 (AFFFFFVSLILLFLSPSYSDV) threads the bilayer. A disordered region spans residues 34 to 58 (ESDPIPYENSDASPGVVTSSESDRQ). The span at 43–53 (SDASPGVVTSS) shows a compositional bias: polar residues. Positions 60 to 86 (VSLHRLEELVRNLTELVARLDAKLSET) form a coiled coil. A helical transmembrane segment spans residues 473–493 (MLWSSPVFFFILFLFGAWHFF). Over residues 511–529 (STTMSSSSTTTAQNSSAFS) the composition is skewed to low complexity. The tract at residues 511-617 (STTMSSSSTT…GNNKALDDES (107 aa)) is disordered. Over residues 531–543 (STRRNDDHMDLRR) the composition is skewed to basic and acidic residues. Positions 563-584 (VGSNDPSSRAPVETTNYRTTAQ) are enriched in polar residues. The segment covering 590-599 (GGSGLDSGGF) has biased composition (gly residues).

It is found in the membrane. This is an uncharacterized protein from Arabidopsis thaliana (Mouse-ear cress).